Consider the following 174-residue polypeptide: Peptide methionine sulfoxide reductase MsrA (174 aa).

Cys-11 is an active-site residue.

This sequence belongs to the MsrA Met sulfoxide reductase family.

It carries out the reaction L-methionyl-[protein] + [thioredoxin]-disulfide + H2O = L-methionyl-(S)-S-oxide-[protein] + [thioredoxin]-dithiol. The catalysed reaction is [thioredoxin]-disulfide + L-methionine + H2O = L-methionine (S)-S-oxide + [thioredoxin]-dithiol. Its function is as follows. Has an important function as a repair enzyme for proteins that have been inactivated by oxidation. Catalyzes the reversible oxidation-reduction of methionine sulfoxide in proteins to methionine. This is Peptide methionine sulfoxide reductase MsrA from Nitratiruptor sp. (strain SB155-2).